Here is a 230-residue protein sequence, read N- to C-terminus: Sugar fermentation stimulation protein homolog (230 aa).

The protein belongs to the SfsA family.

The sequence is that of Sugar fermentation stimulation protein homolog from Clostridium botulinum (strain Okra / Type B1).